A 392-amino-acid chain; its full sequence is GTPase Obg (392 aa).

The 159-residue stretch at 1 to 159 (MKFVDEATIK…RELRLELLLL (159 aa)) folds into the Obg domain. Residues 160–333 (ADVGMLGLPN…VCNELSDFMD (174 aa)) enclose the OBG-type G domain. GTP contacts are provided by residues 166–173 (GLPNAGKS), 191–195 (FTTLI), 213–216 (DIPG), 283–286 (NKTD), and 314–316 (AAV). Residues Ser173 and Thr193 each coordinate Mg(2+). The tract at residues 364–392 (GKNVVTEDGDDDDDWDDEEDDGHVIYARD) is disordered. Residues 370-384 (EDGDDDDDWDDEEDD) show a composition bias toward acidic residues.

The protein belongs to the TRAFAC class OBG-HflX-like GTPase superfamily. OBG GTPase family. Monomer. It depends on Mg(2+) as a cofactor.

The protein localises to the cytoplasm. Functionally, an essential GTPase which binds GTP, GDP and possibly (p)ppGpp with moderate affinity, with high nucleotide exchange rates and a fairly low GTP hydrolysis rate. Plays a role in control of the cell cycle, stress response, ribosome biogenesis and in those bacteria that undergo differentiation, in morphogenesis control. This chain is GTPase Obg, found in Aliivibrio salmonicida (strain LFI1238) (Vibrio salmonicida (strain LFI1238)).